Here is a 320-residue protein sequence, read N- to C-terminus: Probable cell division protein WhiA (320 aa).

Residues 276–310 (TLKELGEMVESGKVSKSGVNHRLRKIDELAEKLRA) constitute a DNA-binding region (H-T-H motif).

This sequence belongs to the WhiA family.

Involved in cell division and chromosome segregation. In Halalkalibacterium halodurans (strain ATCC BAA-125 / DSM 18197 / FERM 7344 / JCM 9153 / C-125) (Bacillus halodurans), this protein is Probable cell division protein WhiA.